The sequence spans 114 residues: Ribonuclease P protein component (114 aa).

The protein belongs to the RnpA family. As to quaternary structure, consists of a catalytic RNA component (M1 or rnpB) and a protein subunit.

It catalyses the reaction Endonucleolytic cleavage of RNA, removing 5'-extranucleotides from tRNA precursor.. Its function is as follows. RNaseP catalyzes the removal of the 5'-leader sequence from pre-tRNA to produce the mature 5'-terminus. It can also cleave other RNA substrates such as 4.5S RNA. The protein component plays an auxiliary but essential role in vivo by binding to the 5'-leader sequence and broadening the substrate specificity of the ribozyme. In Borrelia hermsii (strain HS1 / DAH), this protein is Ribonuclease P protein component.